The chain runs to 202 residues: Small ribosomal subunit protein uS4c (202 aa).

Residues 90–153 (MRLDNVIFRL…KSEAIISKNI (64 aa)) form the S4 RNA-binding domain.

The protein belongs to the universal ribosomal protein uS4 family. In terms of assembly, part of the 30S ribosomal subunit. Contacts protein S5. The interaction surface between S4 and S5 is involved in control of translational fidelity.

The protein resides in the plastid. It localises to the chloroplast. In terms of biological role, one of the primary rRNA binding proteins, it binds directly to 16S rRNA where it nucleates assembly of the body of the 30S subunit. With S5 and S12 plays an important role in translational accuracy. The chain is Small ribosomal subunit protein uS4c (rps4) from Hypopterygium didictyon.